The sequence spans 546 residues: Parathyroid hormone 2 receptor (546 aa).

The first 24 residues, 1-24 (MAWLETFTYICGWLILSSCLLVRA), serve as a signal peptide directing secretion. Residues 27-143 (DSDGTITIEE…GKQEFFESLY (117 aa)) lie on the Extracellular side of the membrane. 4 N-linked (GlcNAc...) asparagine glycosylation sites follow: N51, N106, N116, and N121. Residues 144-167 (ILYTVGYSISFGSLAVAILIIGYF) traverse the membrane as a helical segment. The Cytoplasmic portion of the chain corresponds to 168 to 174 (RRLHCTR). The helical transmembrane segment at 175-194 (NYIHLHLFVSFMLRAMSIFV) threads the bilayer. At 195 to 235 (KDRVAQAHLGVEALQSLVMQGDLQNFIGGPSVDKSQYVGCK) the chain is on the extracellular side. A helical membrane pass occupies residues 236-258 (IAVVMFIYFLATNYYWILVEGLY). The Cytoplasmic segment spans residues 259 to 273 (LHNLIFVSFFSDTKY). The helical transmembrane segment at 274 to 295 (LWGFISIGWGFPAVFVVAWAVA) threads the bilayer. Residues 296-313 (RATLADTRCWELSAGDRW) lie on the Extracellular side of the membrane. Residues 314-334 (IYQAPILAAIGLNFILFLNTV) traverse the membrane as a helical segment. The Cytoplasmic segment spans residues 335–361 (RVLATKIWETNAVGHDMRKQYRKLAKS). The helical transmembrane segment at 362 to 380 (TLVLVLVFGVHYIVFVCQP) threads the bilayer. Over 381 to 391 (HSFSGLWWEIR) the chain is Extracellular. The chain crosses the membrane as a helical span at residues 392–414 (MHCELFFNSFQGFFVSIVYCYCN). Residues 415-546 (GEVQAEVKKM…EGCKGETHPI (132 aa)) are Cytoplasmic-facing. Residues 497–546 (SEQDCQTHSPPEETKEGHRRQGDDSPVMESSRPVAFTLDTEGCKGETHPI) form a disordered region. 2 stretches are compositionally biased toward basic and acidic residues: residues 506–519 (PPEETKEGHRRQGD) and 537–546 (EGCKGETHPI).

It belongs to the G-protein coupled receptor 2 family. As to quaternary structure, binds to TIPF39/TIP39.

The protein localises to the cell membrane. This is a specific receptor for parathyroid hormone. The activity of this receptor is mediated by G proteins which activate adenylyl cyclase. PTH2R may be responsible for PTH effects in a number of physiological systems. It may play a significant role in pancreatic function. PTH2R presence in neurons indicates that it may function as a neurotransmitter receptor. The sequence is that of Parathyroid hormone 2 receptor (Pth2r) from Mus musculus (Mouse).